Consider the following 182-residue polypeptide: MATTRLKTLYQETIVPKLTQQFQYTNVHQVPKLVKITVNRGLGEAAQNAKSLEASLTEIATITGQKPVVTRAKKAIAGFKIRQGMPVGIMVTLRGERMYAFFDRLISLSLPRIRDFRGISPKSFDGRGNYTLGVREQLIFPEIEYDSIDQIRGLDISIITTAKNDEEGRALLKEFGMPFRDQ.

This sequence belongs to the universal ribosomal protein uL5 family. Part of the 50S ribosomal subunit; part of the 5S rRNA/L5/L18/L25 subcomplex. Contacts the 5S rRNA and the P site tRNA. Forms a bridge to the 30S subunit in the 70S ribosome.

Functionally, this is one of the proteins that bind and probably mediate the attachment of the 5S RNA into the large ribosomal subunit, where it forms part of the central protuberance. In the 70S ribosome it contacts protein S13 of the 30S subunit (bridge B1b), connecting the 2 subunits; this bridge is implicated in subunit movement. Contacts the P site tRNA; the 5S rRNA and some of its associated proteins might help stabilize positioning of ribosome-bound tRNAs. This is Large ribosomal subunit protein uL5 from Nostoc sp. (strain PCC 7120 / SAG 25.82 / UTEX 2576).